Here is a 156-residue protein sequence, read N- to C-terminus: Endoribonuclease YbeY (156 aa).

3 residues coordinate Zn(2+): histidine 111, histidine 115, and histidine 121.

It belongs to the endoribonuclease YbeY family. The cofactor is Zn(2+).

Its subcellular location is the cytoplasm. In terms of biological role, single strand-specific metallo-endoribonuclease involved in late-stage 70S ribosome quality control and in maturation of the 3' terminus of the 16S rRNA. The sequence is that of Endoribonuclease YbeY from Hahella chejuensis (strain KCTC 2396).